The sequence spans 277 residues: Probable redox regulatory protein ML2435 (277 aa).

This sequence belongs to the Rv0495c family.

Its function is as follows. Essential for maintaining intracellular redox homeostasis. The chain is Probable redox regulatory protein ML2435 from Mycobacterium leprae (strain TN).